A 684-amino-acid chain; its full sequence is Rabphilin-3A (684 aa).

Residues 1–21 form a disordered region; sequence MTDTVVNRWMYPGDGPLQSND. The 118-residue stretch at 40–157 folds into the RabBD domain; sequence QRKQEELTDE…KRSGAWFFKG (118 aa). The segment at 88 to 145 adopts an FYVE-type zinc-finger fold; it reads GDGVNRCILCGEQLGMLGSACVVCEDCKKNVCTKCGVETSNNRPHPVWLCKICLEQRE. 8 residues coordinate Zn(2+): Cys94, Cys97, Cys111, Cys114, Cys119, Cys122, Cys137, and Cys140. Residues 162–377 form a disordered region; sequence VLPQPMPIKK…EEEEANSYDS (216 aa). Over residues 199–208 the composition is skewed to basic and acidic residues; sequence ARGDMEDRRA. Arg223 bears the Omega-N-methylarginine mark. Residues 243–252 are compositionally biased toward basic and acidic residues; that stretch reads RDSEGWDHGH. Ser274 is subject to Phosphoserine. Residues 283-299 show a composition bias toward pro residues; that stretch reads ASMPSPAPPQPVQPGPP. The span at 301-310 shows a compositional bias: low complexity; sequence GSRAAPGPGR. A C2 1 domain is found at 382–504; sequence TLGALEFSLL…KANQRKNFNI (123 aa). The Ca(2+) site is built by Met412, Asp413, Asp419, Asp474, Glu475, Asp476, Glu482, Glu529, Asp571, Asp577, Asp631, Tyr632, Asp633, and Asp639. The region spanning 540–673 is the C2 2 domain; that stretch reads ERGKILVSLM…NKDKKIERWH (134 aa). Ser682 and Ser683 each carry phosphoserine.

Interacts with RAB3B, RAB3C, RAB3D, RAB8A, RAB27A and RAB27B. Interacts with RAB3A; this interaction recruits RPH3A to synaptic vesicules. Interacts (via C2B domain) with SNAP25. Interacts with deubiquitinating enzyme CAND1; this interaction results in the deubiquitination of RPH3A. Interacts with GRIN2A and DLG4; this ternary complex regulates NMDA receptor composition at postsynaptic membranes. Interacts with SNCA. Ca(2+) serves as cofactor. Post-translationally, ubiquitinated. Deubiquitinated by CAND1 to prevent its degradation. In terms of tissue distribution, specifically expressed in brain.

It localises to the cytoplasmic vesicle. It is found in the secretory vesicle. Its subcellular location is the synaptic vesicle membrane. The protein resides in the cell projection. The protein localises to the dendritic spine. It localises to the postsynaptic cell membrane. It is found in the membrane. Plays an essential role in docking and fusion steps of regulated exocytosis. At the presynaptic level, RPH3A is recruited by RAB3A to the synaptic vesicle membrane in a GTP-dependent manner where it modulates synaptic vesicle trafficking and calcium-triggered neurotransmitter release. In the post-synaptic compartment, forms a ternary complex with GRIN2A and DLG4 and regulates NMDA receptor stability. Also plays a role in the exocytosis of arginine vasopressin hormone. This is Rabphilin-3A (Rph3a) from Rattus norvegicus (Rat).